The sequence spans 623 residues: MSGIFRFSGDEDCLLGGSMYLSPGSCPGVYYPARKRLRVAATSFYSGFEEKQTSIDVLPEECLFEILRRLPSGQERSACACVSKHWLNLLSSISRSEVNESSVQDVEEGEGFLSRSLEGKKATDLRLAAIAVGTSSRGGLGKLQIRGSGFESKVTDVGLGAVAHGCPSLRIVSLWNLPAVSDLGLSEIARSCPMIEKLDLSRCPGITDSGLVAIAENCVNLSDLTIDSCSGVGNEGLRAIARRCVNLRSISIRSCPRIGDQGVAFLLAQAGSYLTKVKLQMLNVSGLSLAVIGHYGAAVTDLVLHGLQGVNEKGFWVMGNAKGLKKLKSLSVMSCRGMTDVGLEAVGNGCPDLKHVSLNKCLLVSGKGLVALAKSALSLESLKLEECHRINQFGLMGFLMNCGSKLKAFSLANCLGISDFNSESSLPSPSCSSLRSLSIRCCPGFGDASLAFLGKFCHQLQDVELCGLNGVTDAGVRELLQSNNVGLVKVNLSECINVSDNTVSAISVCHGRTLESLNLDGCKNITNASLVAVAKNCYSVNDLDISNTLVSDHGIKALASSPNHLNLQVLSIGGCSSITDKSKACIQKLGRTLLGLNIQRCGRISSSTVDTLLENLWRCDILY.

An F-box domain is found at 52–106 (QTSIDVLPEECLFEILRRLPSGQERSACACVSKHWLNLLSSISRSEVNESSVQDV). LRR repeat units follow at residues 119–147 (GKKATDLRLAAIAVGTSSRGGLGKLQIRG), 151–176 (ESKVTDVGLGAVAHGCPSLRIVSLWN), 177–202 (LPAVSDLGLSEIARSCPMIEKLDLSR), 203–228 (CPGITDSGLVAIAENCVNLSDLTIDS), 229–254 (CSGVGNEGLRAIARRCVNLRSISIRS), 255–281 (CPRIGDQGVAFLLAQAGSYLTKVKLQM), 307–334 (LQGVNEKGFWVMGNAKGLKKLKSLSVMS), 335–360 (CRGMTDVGLEAVGNGCPDLKHVSLNK), 361–386 (CLLVSGKGLVALAKSALSLESLKLEE), 387–413 (CHRINQFGLMGFLMNCGSKLKAFSLAN), 414–441 (CLGISDFNSESSLPSPSCSSLRSLSIRC), 442–467 (CPGFGDASLAFLGKFCHQLQDVELCG), 468–494 (LNGVTDAGVRELLQSNNVGLVKVNLSE), 495–521 (CINVSDNTVSAISVCHGRTLESLNLDG), 522–547 (CKNITNASLVAVAKNCYSVNDLDISN), 548–574 (TLVSDHGIKALASSPNHLNLQVLSIGG), 575–600 (CSSITDKSKACIQKLGRTLLGLNIQR), and 601–623 (CGRISSSTVDTLLENLWRCDILY).

Part of a SCF (SKP1-cullin-F-box) protein ligase complex. Interacts with CUL1, SKP1A/ASK1, SKP1B/ASK2, EIN3, and EIL1. Ubiquitous.

Its subcellular location is the nucleus. The protein operates within protein modification; protein ubiquitination. Component of SCF(EBF1) E3 ubiquitin ligase complexes, which may mediate the ubiquitination and subsequent proteasomal degradation of target proteins (probably including EIN3 and EIL1). Regulator of the ethylene signaling cascade by modulating the stability of EIN3 and EIL1 proteins. The protein is EIN3-binding F-box protein 2 (EBF2) of Arabidopsis thaliana (Mouse-ear cress).